The primary structure comprises 265 residues: Cell adhesion molecule CEACAM7 (265 aa).

The N-terminal stretch at 1–35 (MGSPSACPYRVCIPWQGLLLTASLLTFWNLPNSAQ) is a signal peptide. The 107-residue stretch at 36–142 (TNIDVVPFNV…EEVTRQFYVF (107 aa)) folds into the Ig-like V-type domain. N-linked (GlcNAc...) asparagine glycosylation is found at Asn57, Asn85, Asn105, Asn112, Asn174, Asn183, and Asn198. An Ig-like C2-type domain is found at 146-233 (PKPSITSNNF…ASRSDPVTLN (88 aa)). Residues Cys168 and Cys216 are joined by a disulfide bond. Ser242 carries GPI-anchor amidated serine lipidation. Residues 243 to 265 (SPDLSAGTAVSIMIGVLAGMALI) constitute a propeptide, removed in mature form.

The protein belongs to the immunoglobulin superfamily. CEA family. As to quaternary structure, homodimer. Expressed in columnar epithelial cells of the colon (at protein level). Strongly down-regulated in colonic adenocarcinomas.

It is found in the cell membrane. It localises to the apical cell membrane. This chain is Cell adhesion molecule CEACAM7, found in Homo sapiens (Human).